The primary structure comprises 72 residues: DNA-directed RNA polymerase subunit Rpo10 (72 aa).

Zn(2+) contacts are provided by cysteine 7, cysteine 10, cysteine 54, and cysteine 55.

It belongs to the archaeal Rpo10/eukaryotic RPB10 RNA polymerase subunit family. Part of the RNA polymerase complex. Zn(2+) serves as cofactor.

Its subcellular location is the cytoplasm. It catalyses the reaction RNA(n) + a ribonucleoside 5'-triphosphate = RNA(n+1) + diphosphate. Its function is as follows. DNA-dependent RNA polymerase (RNAP) catalyzes the transcription of DNA into RNA using the four ribonucleoside triphosphates as substrates. The sequence is that of DNA-directed RNA polymerase subunit Rpo10 from Picrophilus torridus (strain ATCC 700027 / DSM 9790 / JCM 10055 / NBRC 100828 / KAW 2/3).